We begin with the raw amino-acid sequence, 1026 residues long: Phosphoenolpyruvate carboxylase (1026 aa).

Residues histidine 199 and lysine 672 contribute to the active site.

Belongs to the PEPCase type 1 family. Mg(2+) serves as cofactor.

It carries out the reaction oxaloacetate + phosphate = phosphoenolpyruvate + hydrogencarbonate. In terms of biological role, forms oxaloacetate, a four-carbon dicarboxylic acid source for the tricarboxylic acid cycle. The polypeptide is Phosphoenolpyruvate carboxylase (ppc) (Nostoc sp. (strain PCC 7120 / SAG 25.82 / UTEX 2576)).